The sequence spans 2552 residues: MDYKNKYQSNENCNKVAIIGIGFRFPNLKGDLTPNGLWSQLLNKYDGIVKNDRWNESFYKTGDIPTKYAGLIPFEELKSFDPLFFGINPSEVIHMCPQQRILLKCTWEALEDSGIDPIEIRDSNTSVFLGCSNFDYQNLNKNNNKIQQNIFASSSHSVSNRISYCFDLHGESMTIDTACSSSSNAIRRGYKSIIDGSSNISVVGGINILLDPNTSKSYSQLNMLGKDGKCKTFDADADGYVRSESAGIAILKNLNDAIKDGNNIYCVIDGSASNVDGNGFSDKSNFYSPSKSSQVECIRLALESTNGGVNENDIVYFEAHGTGTPTGDPIELESVSIALKTSENRSSNNPLLIGSFKPNIGHSECASGISSLIKCCLILKNQCFVPNINYNKPNPNIKFNQWNLKVVTDPIDFSTLKLSNKPISIAINNFGVTGSNCCLIVSSFKGNQTNNNNNKSKSPKQYLIPFSTNSIKSLDLYKSRIDNNVEFKEFAENQIKSKSKKLIQRSVAIASNWDEFNLKSNTINTSNDKLTSNMLVSSNKKNATMVFVFCGQGAQYSTMAKNLYDNEPIFKKSMDKIDSKLSEYYGFSILEKLRSFNENDLKGIQYSIIAQPSTCMVQISLFELYCHWGIKPSIIVGHSLGEISSSYCSGMIDLDTFCYLIYHRSMVQSKTNGLGRMLSISIGENEYNSKYSSRYPELEIACYNSPSSIVIAGKELILNEIIKELKQDGVFCTILGSPTSFHTSSQIPVKDEILKISFKSKQSTYPIFSTVTTNLYDEMNPFDTKYVYDNIINPVRFTNTISNIYKHIELNYSVNNNSNEIIFIEIAPHPTLSFYLKQMVPEDKKQSVSIFSPLSKKKSNDLFEIQKLISELYCLGYNGIGFNIQLSNLNENDNIQTSLSLPLYQWEEQEYWKLDSLYQHHLSNGPSINHLGISNSNHTPYIKSYQTHIDIQKKPFQWLKGHQIKGKYYFPGCGYIDNILKIFGDNSESTTNPNKELPDILISFIEFKTPLIFMDGVNQCLQTNIHSTGKKEYKALFHFKDEKSSSDWVQTSTANFQLFSRGQGLNEDDEESLFKYNINDLISNQCNLTKLSKQELYSHIKTKCGLNYSGDFQRVEKCYFGNNCSLSELSLSQGVNENRSTFFDSSIIDCCLHGSIGLIDENCQLVFEKLEGLTYYSSKVPTTTSQHSKIYVYSKLKPRIGDSYSASIIVMLENGTVLFEMENASFKSTTKIKDSLAMEYPTNEIYSCYLQSKDSLIPSLSSFDHIFKRKITDEYVDQIKIYESFIPKLLFSNINKRCPEITIAEIQSSEIEQLLLKYYKIKEDNDNKWLSRLFTFAFESIKQWYHNEDYDFENVLSPHNFKIFSKSTKIISKLLFPLENDNDEDSPQSLFEGGLLDKFYSSGFSAQNELVGEIIQESIKPILNEKLVFRILEFGGGVGSLSLLVLEKINSLLIQYPNYQIDIEYTWSDISPSFITEAKAKFEKFNDRVNIIYKALNLEQPLIGEKQGLKPQYFDYIIMFNVLHVIKDVKYGVEQIYQLLVPNGHLLFIEPIYKSIVGDGIFGVFDQWWSFQDTEIRKDRCCMNQQTWYKLLKSVNFNDDIKMTPELTCFVIQAQKPSISNLSFSKSETTNYNNIIVFGNKDDSNLSNNFIKSIDNGNLQFISTIEEFNKMTKYISNESIIYFIKSIDELSVDNFVNITHEYTQINQKLMELNSKCKHVLITNDSTTTNYLSSSLIGAARYYHECPLELFILNFDTPSIIENQNLFKTIEPLINSSINIQREFIINNHKVYYERIKNETKLKSIFKNSSSFESLEQVDNFMISLTPNLEYKVKVKPTSILKENEVEIKVMSTGLNYKDYLIYAGLVESVEPIFGIEFSGIITNIGSGNKEFKVGDSVYGTGKSTTSSHIITDIDVISHKPSNISHSEASSIPVVYLTSYHSLYNIGALKNNETILIHSATGGVGLSTLEILKWKGHSGLIFVTVGSNEKEEYLRENYGDMISGIYSTRNKNFVKQIKSKISKLNPFGKSGVDFILNTLSSSDYMDSNFKCLNMSGRIVDLSITHLNSNEFTDNKKFKYNYGYHNIELQYVDKKIIKSTLSIISNAVSSNDLQLIPITEYSIENVKDSIEFINERVHMGKIVVDHENQDSIINELIEKQKSIDKFDQSIFKQNYKLEPSLLGKNILITGQSGIVLEILKWILRNSENNSIDNIIILSKSSIKWEMELLINKTKLLNSNSINSMGNYLNKIKFHFKSVDISDSGLTDKGIHELLIENPDINNIDSIFHFAYTQATCNSDEVDLHHLTQSHSAKSMGAINLHNQSIKRNWKIINFIMSSSITSKTSSANQCGYISSNNVLDALSKYRISIGLPTICTNYGLIQSTGFVSRNESVAALLSGEGLLPISTNLILGTLDLQLQNQAQSSNLILSNFNFTSLNGLPQKSLISKFDYQININEENEKSKSLLKDDNVELTVDQLITFKISELLSTDILKLNKDIILVDYGVDSLVIIQLKNWVDKEFSIPNALTIQQVQNSTINSFIQLVKNSIDKKNKK.

Residues 13 to 443 enclose the Ketosynthase family 3 (KS3) domain; sequence CNKVAIIGIG…GSNCCLIVSS (431 aa). Residues Cys179, His320, and His362 each act as for beta-ketoacyl synthase activity in the active site. An acyl/malonyl transferase region spans residues 629–662; it reads GIKPSIIVGHSLGEISSSYCSGMIDLDTFCYLIY. Residue Ser639 is the For acyl/malonyl transferase activity of the active site. Positions 928–1063 are N-terminal hotdog fold; sequence INHLGISNSN…ANFQLFSRGQ (136 aa). The 308-residue stretch at 928–1235 folds into the PKS/mFAS DH domain; that stretch reads INHLGISNSN…FKSTTKIKDS (308 aa). The Proton acceptor; for dehydratase activity role is filled by His962. The tract at residues 1087–1235 is C-terminal hotdog fold; that stretch reads NLTKLSKQEL…FKSTTKIKDS (149 aa). Asp1149 serves as the catalytic Proton donor; for dehydratase activity. The Carrier domain occupies 2467–2546; sequence DNVELTVDQL…SFIQLVKNSI (80 aa). Ser2505 is subject to O-(pantetheine 4'-phosphoryl)serine.

Requires pantetheine 4'-phosphate as cofactor.

Its function is as follows. Probable polyketide synthase. This chain is Probable polyketide synthase 40 (pks40), found in Dictyostelium discoideum (Social amoeba).